A 251-amino-acid polypeptide reads, in one-letter code: WUSCHEL-related homeobox 4 (251 aa).

Disordered regions lie at residues 1–21 and 33–93; these read MKVH…DSTS and LAPK…RWNP. Residues 11-21 are compositionally biased toward low complexity; sequence SSSWDQHDSTS. Over residues 71–83 the composition is skewed to basic and acidic residues; the sequence is KFEHKRDPPHQLE. Residues 86–150 constitute a DNA-binding region (homeobox; WUS-type); sequence PGGTRWNPTQ…NHKARERQKQ (65 aa).

This sequence belongs to the WUS homeobox family. In terms of tissue distribution, expressed in the vasculature of the whole plant (roots, hypocotyls, cotyledons and leaves), trichomes and stomata. Expresse in the developing vascular bundles of root and shoot lateral organs.

The protein resides in the nucleus. Promotes differentiation and/or maintenance of the vascular procambium, the initial cells of the developing vasculature. Part of the TDIF-TDR-WOX4 signaling pathway that plays a crucial role in the maintenance of the vascular meristem organization during secondary growth. Is required for promoting the proliferation of procambial/cambial stem cells but not for repressing their commitment to xylem differentiation in response to the TDIF signal. Acts redundantly with WOX14 downstream of the TDR/PXY receptor kinase to regulate procambial cell proliferation and differentiation in vascular tissue, independently of any role in vascular. Acts as a cambium regulator in the inflorescence stem. Is required for auxin-dependent cambium stimulation in the inflorescence stem. The polypeptide is WUSCHEL-related homeobox 4 (WOX4) (Arabidopsis thaliana (Mouse-ear cress)).